We begin with the raw amino-acid sequence, 338 residues long: Aspartate-semialdehyde dehydrogenase (338 aa).

Residues 9 to 12 (TGQV) and 37 to 38 (RS) each bind NADP(+). A phosphate-binding site is contributed by Arg-93. Residue Cys-123 is the Acyl-thioester intermediate of the active site. Gln-150 contacts substrate. Position 153-154 (153-154 (SG)) interacts with NADP(+). Lys-220 serves as a coordination point for phosphate. Arg-242 provides a ligand contact to substrate. His-249 (proton acceptor) is an active-site residue. An NADP(+)-binding site is contributed by Asn-316.

The protein belongs to the aspartate-semialdehyde dehydrogenase family. As to quaternary structure, homodimer.

The catalysed reaction is L-aspartate 4-semialdehyde + phosphate + NADP(+) = 4-phospho-L-aspartate + NADPH + H(+). It participates in amino-acid biosynthesis; L-lysine biosynthesis via DAP pathway; (S)-tetrahydrodipicolinate from L-aspartate: step 2/4. Its pathway is amino-acid biosynthesis; L-methionine biosynthesis via de novo pathway; L-homoserine from L-aspartate: step 2/3. The protein operates within amino-acid biosynthesis; L-threonine biosynthesis; L-threonine from L-aspartate: step 2/5. Catalyzes the NADPH-dependent formation of L-aspartate-semialdehyde (L-ASA) by the reductive dephosphorylation of L-aspartyl-4-phosphate. This Streptomyces akiyoshiensis protein is Aspartate-semialdehyde dehydrogenase.